The following is a 208-amino-acid chain: NAD(P)H-quinone oxidoreductase subunit M, chloroplastic (208 aa).

A chloroplast-targeting transit peptide spans 1-21 (MAATSSYTACTKFSMLGWIGG). Residues 37 to 49 (QQAEVEESQQVNA) show a composition bias toward low complexity. The disordered stretch occupies residues 37-70 (QQAEVEESQQVNAQEEEQEKMKQQGKQKLPRPVE).

It belongs to the NDH complex subunit M family. In terms of assembly, part of the chloroplast NDH complex, composed of a mixture of chloroplast and nucleus encoded subunits. Component of the NDH subcomplex A, at least composed of ndhH, ndhI, ndhJ, ndhK, ndhL, ndhM, ndhN and ndhO.

It localises to the plastid. The protein resides in the chloroplast thylakoid membrane. The catalysed reaction is a plastoquinone + NADH + (n+1) H(+)(in) = a plastoquinol + NAD(+) + n H(+)(out). It carries out the reaction a plastoquinone + NADPH + (n+1) H(+)(in) = a plastoquinol + NADP(+) + n H(+)(out). Functionally, NDH shuttles electrons from NAD(P)H:plastoquinone, via FMN and iron-sulfur (Fe-S) centers, to quinones in the photosynthetic chain and possibly in a chloroplast respiratory chain. The immediate electron acceptor for the enzyme in this species is believed to be plastoquinone. Couples the redox reaction to proton translocation, and thus conserves the redox energy in a proton gradient. This chain is NAD(P)H-quinone oxidoreductase subunit M, chloroplastic, found in Vitis vinifera (Grape).